The chain runs to 491 residues: Lysine--tRNA ligase (491 aa).

Residues E400 and E407 each coordinate Mg(2+).

Belongs to the class-II aminoacyl-tRNA synthetase family. As to quaternary structure, homodimer. It depends on Mg(2+) as a cofactor.

The protein resides in the cytoplasm. The catalysed reaction is tRNA(Lys) + L-lysine + ATP = L-lysyl-tRNA(Lys) + AMP + diphosphate. The chain is Lysine--tRNA ligase from Mesomycoplasma hyopneumoniae (strain J / ATCC 25934 / NCTC 10110) (Mycoplasma hyopneumoniae).